We begin with the raw amino-acid sequence, 315 residues long: Homoserine kinase (315 aa).

P97–T107 is an ATP binding site.

Belongs to the GHMP kinase family. Homoserine kinase subfamily.

Its subcellular location is the cytoplasm. It catalyses the reaction L-homoserine + ATP = O-phospho-L-homoserine + ADP + H(+). The protein operates within amino-acid biosynthesis; L-threonine biosynthesis; L-threonine from L-aspartate: step 4/5. Its function is as follows. Catalyzes the ATP-dependent phosphorylation of L-homoserine to L-homoserine phosphate. The chain is Homoserine kinase from Synechococcus sp. (strain CC9311).